Here is a 549-residue protein sequence, read N- to C-terminus: Cation/acetate symporter ActP (549 aa).

Helical transmembrane passes span 33–53 (WQAI…TYWA), 77–97 (LAIA…ALVF), 103–123 (GLIY…LIAE), 148–168 (ILSA…QMVG), 183–203 (IAVV…GMLA), 206–226 (WVQI…AFMV), 262–282 (ISAL…PHIL), 303–323 (GFMG…IMLV), 355–375 (LFLG…VAGL), 404–424 (VSKI…MLFE), 428–448 (IAFM…PIIL), 464–484 (GGWL…TIWV), and 493–513 (IFPY…GIWF).

It belongs to the sodium:solute symporter (SSF) (TC 2.A.21) family.

It localises to the cell inner membrane. Functionally, transports acetate. The chain is Cation/acetate symporter ActP from Shigella boydii serotype 4 (strain Sb227).